A 320-amino-acid polypeptide reads, in one-letter code: Apolipoprotein E (320 aa).

The N-terminal stretch at 1–18 (MKVLWAALLVAFLAGCQG) is a signal peptide. 8 consecutive repeat copies span residues 82–103 (ALMEETMKELKAYKSELEEQLS), 104–125 (PVAEETRARLSKELQAAQARLG), 126–147 (ADMEDVRSRLAQYRSEVQAMLG), 148–169 (QSTDELRARLASHLRKLRKRLL), 170–191 (RDVDDLQKRLAVYQAGAREGAE), 192–213 (RGVSAIRERLGTLVEQGRARAA), 214–236 (TVGSSLASQPLQERAQAWGERLR), and 237–258 (ARMEEVGSRTRDRLDEVKEQVE). Residues 82-258 (ALMEETMKEL…RLDEVKEQVE (177 aa)) are 8 X 22 AA approximate tandem repeats. At Met145 the chain carries Methionine sulfoxide. Position 149 is a phosphoserine (Ser149). The interval 160–170 (HLRKLRKRLLR) is LDL and other lipoprotein receptors binding. 164–167 (LRKR) is a heparin binding site. A lipid-binding and lipoprotein association region spans residues 212–293 (AATVGSSLAS…SWFEPLVEDM (82 aa)). An O-linked (GalNAc...) threonine glycan is attached at Thr214. A heparin-binding site is contributed by 232–239 (GERLRARM). The tract at residues 269-320 (QQMRLQAEAFQARLKSWFEPLVEDMQRQWAGLVEKVQAAVGASTTPVPSDNH) is homooligomerization. Residues 281-293 (RLKSWFEPLVEDM) form a specificity for association with VLDL region.

This sequence belongs to the apolipoprotein A1/A4/E family. In terms of assembly, homotetramer. May interact with ABCA1; functionally associated with ABCA1 in the biogenesis of HDLs. May interact with APP/A4 amyloid-beta peptide; the interaction is extremely stable in vitro but its physiological significance is unclear. May interact with MAPT. May interact with MAP2. In the cerebrospinal fluid, interacts with secreted SORL1. Interacts with PMEL; this allows the loading of PMEL luminal fragment on ILVs to induce fibril nucleation. In terms of processing, APOE exists as multiple glycosylated and sialylated glycoforms within cells and in plasma. The extent of glycosylation and sialylation are tissue and context specific. Glycated in plasma VLDL. Post-translationally, phosphorylated by FAM20C in the extracellular medium.

It is found in the secreted. The protein localises to the extracellular space. It localises to the extracellular matrix. The protein resides in the extracellular vesicle. Its subcellular location is the endosome. It is found in the multivesicular body. Its function is as follows. APOE is an apolipoprotein, a protein associating with lipid particles, that mainly functions in lipoprotein-mediated lipid transport between organs via the plasma and interstitial fluids. APOE is a core component of plasma lipoproteins and is involved in their production, conversion and clearance. Apolipoproteins are amphipathic molecules that interact both with lipids of the lipoprotein particle core and the aqueous environment of the plasma. As such, APOE associates with chylomicrons, chylomicron remnants, very low density lipoproteins (VLDL) and intermediate density lipoproteins (IDL) but shows a preferential binding to high-density lipoproteins (HDL). It also binds a wide range of cellular receptors including the LDL receptor/LDLR, the LDL receptor-related proteins LRP1, LRP2 and LRP8 and the very low-density lipoprotein receptor/VLDLR that mediate the cellular uptake of the APOE-containing lipoprotein particles. Finally, APOE also has a heparin-binding activity and binds heparan-sulfate proteoglycans on the surface of cells, a property that supports the capture and the receptor-mediated uptake of APOE-containing lipoproteins by cells. A main function of APOE is to mediate lipoprotein clearance through the uptake of chylomicrons, VLDLs, and HDLs by hepatocytes. APOE is also involved in the biosynthesis by the liver of VLDLs as well as their uptake by peripheral tissues ensuring the delivery of triglycerides and energy storage in muscle, heart and adipose tissues. By participating in the lipoprotein-mediated distribution of lipids among tissues, APOE plays a critical role in plasma and tissues lipid homeostasis. APOE is also involved in two steps of reverse cholesterol transport, the HDLs-mediated transport of cholesterol from peripheral tissues to the liver, and thereby plays an important role in cholesterol homeostasis. First, it is functionally associated with ABCA1 in the biogenesis of HDLs in tissues. Second, it is enriched in circulating HDLs and mediates their uptake by hepatocytes. APOE also plays an important role in lipid transport in the central nervous system, regulating neuron survival and sprouting. This chain is Apolipoprotein E (APOE), found in Cebus capucinus (White-faced sapajou).